The sequence spans 188 residues: Elongation factor P (188 aa).

Lys-34 is modified (N6-(3,6-diaminohexanoyl)-5-hydroxylysine).

Belongs to the elongation factor P family. In terms of processing, may be beta-lysylated on the epsilon-amino group of Lys-34 by the combined action of EpmA and EpmB, and then hydroxylated on the C5 position of the same residue by EpmC (if this protein is present). Lysylation is critical for the stimulatory effect of EF-P on peptide-bond formation. The lysylation moiety may extend toward the peptidyltransferase center and stabilize the terminal 3-CCA end of the tRNA. Hydroxylation of the C5 position on Lys-34 may allow additional potential stabilizing hydrogen-bond interactions with the P-tRNA.

It localises to the cytoplasm. It functions in the pathway protein biosynthesis; polypeptide chain elongation. Its function is as follows. Involved in peptide bond synthesis. Alleviates ribosome stalling that occurs when 3 or more consecutive Pro residues or the sequence PPG is present in a protein, possibly by augmenting the peptidyl transferase activity of the ribosome. Modification of Lys-34 is required for alleviation. The sequence is that of Elongation factor P from Xylella fastidiosa (strain M23).